The chain runs to 547 residues: Cytochrome P450 monooxygenase 81 (547 aa).

2 helical membrane passes run 6–23 and 106–124; these read IPTQ…LFLL and AFFA…ATAG. Residue Cys483 coordinates heme. Asn503 and Asn516 each carry an N-linked (GlcNAc...) asparagine glycan.

The protein belongs to the cytochrome P450 family. The cofactor is heme.

The protein localises to the membrane. The protein operates within secondary metabolite biosynthesis. Its function is as follows. Cytochrome P450 monooxygenase that is able to use dehydroabietic acid as a substrate for oxidation. This is Cytochrome P450 monooxygenase 81 from Postia placenta (strain ATCC 44394 / Madison 698-R) (Brown rot fungus).